The sequence spans 287 residues: Pantothenate synthetase (287 aa).

Residue 30-37 coordinates ATP; the sequence is MGALHSGH. Histidine 37 functions as the Proton donor in the catalytic mechanism. Residue glutamine 61 participates in (R)-pantoate binding. Glutamine 61 contributes to the beta-alanine binding site. 152–155 serves as a coordination point for ATP; the sequence is GQKD. Glutamine 158 lines the (R)-pantoate pocket. ATP is bound by residues isoleucine 181 and 189 to 192; that span reads ESSR.

The protein belongs to the pantothenate synthetase family. Homodimer.

The protein resides in the cytoplasm. It carries out the reaction (R)-pantoate + beta-alanine + ATP = (R)-pantothenate + AMP + diphosphate + H(+). Its pathway is cofactor biosynthesis; (R)-pantothenate biosynthesis; (R)-pantothenate from (R)-pantoate and beta-alanine: step 1/1. Functionally, catalyzes the condensation of pantoate with beta-alanine in an ATP-dependent reaction via a pantoyl-adenylate intermediate. The chain is Pantothenate synthetase from Corynebacterium efficiens (strain DSM 44549 / YS-314 / AJ 12310 / JCM 11189 / NBRC 100395).